The following is a 531-amino-acid chain: Methyl-accepting chemotaxis protein McpN (531 aa).

At Met1–Gln24 the chain is on the cytoplasmic side. A helical transmembrane segment spans residues Phe25–Leu45. Over Ser46–Gln174 the chain is Periplasmic. Positions Glu52 to Ala140 are pilJ-type. An N-box motif is present at residues Ile54 to Gln65. Nitrate is bound at residue Arg61. The chain crosses the membrane as a helical span at residues His175–Gly195. Topologically, residues Arg196–Thr531 are cytoplasmic. An HAMP domain is found at Ala201–Ala254. Residues Ser259 to Ser495 form the Methyl-accepting transducer domain.

It belongs to the methyl-accepting chemotaxis (MCP) protein family. In terms of assembly, ligand free ligand-binding domain (LBD) is present in a monomer-dimer equilibrium. Nitrate binding to the periplasmic LBD stabilizes the homodimer.

Its subcellular location is the cell inner membrane. In terms of biological role, chemotactic-signal transducers respond to changes in the concentration of attractants and repellents in the environment, transduce a signal from the outside to the inside of the cell, and facilitate sensory adaptation through the variation of the level of methylation. McpN is a chemoreceptor that recognizes specifically nitrate and mediates chemoattraction. Binds nitrate specifically and shows no affinity for other ligands such as nitrite. McpN-mediated taxis occurs only under nitrate starvation conditions. The protein is Methyl-accepting chemotaxis protein McpN of Pseudomonas aeruginosa (strain ATCC 15692 / DSM 22644 / CIP 104116 / JCM 14847 / LMG 12228 / 1C / PRS 101 / PAO1).